An 820-amino-acid chain; its full sequence is MNESYQPTLIEQLAQEYWEENETFEVKEDLSREKFYCLSMLPYPSGDLHMGHVRNYTIGDVIARYQIHKGRNVLQPMGWDAFGLPAENAAIQRELPPAEWTRKNIKKMRKQLKQLGFAYDWSREITTCDSTYYRWEQWLFLQLYKKGLAYKKNAIVNWDPVDQTVLANEQIVDGRGWRSGAVVERREISQWFLKITDYSEELLKDLDELKEWPEQVITMQRNWIGQSQGVIINFNLEKGPDKLQVYTTRPDTLMGVTYLAIAPEHPLAKERAKKSKKIAAFLKKCKQTRVAEADIATQEKEGIDSGLFAVHPLSKEKLPIWIANFVLMEYASGVVMAVPAHDERDHEFALKYDLPLKPVIEPADGHDWDYNQAAYTNPGKLINSGSFNDIDSKTAFNLIADYLKNNGAGSRQTHYRLRDWGISRQRYWGTPIPIIYCKTCGTVPVPENQLPVLLPEDIIPTGHGSPLKETASFYKTRCPVCNKPATRETDTMDTFVESSWYYARYSCPDQDKVMLDDRAKYWTPVDQYIGGIEHAVMHLLYARFMHKILRDLGLLNSNEPFIRLLTQGMVLKDGAKMSKSKGNVVTPQSLIKKYGADTVRLFIIFAAPPEQDLEWSDSGVEGAYRFLKKLWGFSYRIKDALLAINQQKERSNYQWEAPEHRQTRQQIHECLQQANIDMERLQFNTVVSAVMKILNILIKLTTDNDAEAHLIREGTGILLRLLSPITPHISHHLWQSLGFGGDILDTPWPRPDPKALQTTELELIVQINGKLRGRIQVPTEASKEIIESTALNQENVQRHLADKKIKKVIVVPKKLINIVV.

The 'HIGH' region motif lies at 42-52; sequence PYPSGDLHMGH. The 'KMSKS' region signature appears at 576-580; that stretch reads KMSKS. An ATP-binding site is contributed by Lys-579.

This sequence belongs to the class-I aminoacyl-tRNA synthetase family.

Its subcellular location is the cytoplasm. It catalyses the reaction tRNA(Leu) + L-leucine + ATP = L-leucyl-tRNA(Leu) + AMP + diphosphate. The sequence is that of Leucine--tRNA ligase from Coxiella burnetii (strain CbuG_Q212) (Coxiella burnetii (strain Q212)).